Here is a 429-residue protein sequence, read N- to C-terminus: 3-phosphoshikimate 1-carboxyvinyltransferase (429 aa).

Residues lysine 23, serine 24, and arginine 28 each coordinate 3-phosphoshikimate. Residue lysine 23 participates in phosphoenolpyruvate binding. 2 residues coordinate phosphoenolpyruvate: glycine 95 and arginine 123. Positions 168, 170, 316, and 343 each coordinate 3-phosphoshikimate. Glutamine 170 contacts phosphoenolpyruvate. The Proton acceptor role is filled by aspartate 316. Phosphoenolpyruvate-binding residues include arginine 347 and arginine 389.

This sequence belongs to the EPSP synthase family. In terms of assembly, monomer.

Its subcellular location is the cytoplasm. It carries out the reaction 3-phosphoshikimate + phosphoenolpyruvate = 5-O-(1-carboxyvinyl)-3-phosphoshikimate + phosphate. It participates in metabolic intermediate biosynthesis; chorismate biosynthesis; chorismate from D-erythrose 4-phosphate and phosphoenolpyruvate: step 6/7. Catalyzes the transfer of the enolpyruvyl moiety of phosphoenolpyruvate (PEP) to the 5-hydroxyl of shikimate-3-phosphate (S3P) to produce enolpyruvyl shikimate-3-phosphate and inorganic phosphate. This Bacillus cereus (strain 03BB102) protein is 3-phosphoshikimate 1-carboxyvinyltransferase.